A 68-amino-acid polypeptide reads, in one-letter code: TxMMSK-03 (68 aa).

A signal peptide spans methionine 1–alanine 19. Residues valine 20–threonine 50 constitute a propeptide that is removed on maturation. Intrachain disulfides connect cysteine 53–cysteine 67, cysteine 54–cysteine 63, and cysteine 59–cysteine 66. 4-hydroxyproline; partial is present on proline 65.

In terms of processing, contains 3 disulfide bonds. As to expression, expressed by the venom duct. Both hydroxylated and non-hydroxylated forms are mostly and only present in part 2 (proximal of the venom bulb) of the venom duct, respectively.

The protein localises to the secreted. The polypeptide is TxMMSK-03 (Conus textile (Cloth-of-gold cone)).